The following is a 236-amino-acid chain: RNA-binding protein 24 (236 aa).

The RRM domain maps to 11–88 (TKIFVGGLPY…RKANVNLAYL (78 aa)). Positions 175–199 (QYPYAASPAAAGYVTAGGYGYAVQQ) are necessary for interaction with EIF4E.

Interacts with EIF4E; this interaction prevents EIF4E from binding to p53/TP53 mRNA and inhibits the assembly of translation initiation complex. As to quaternary structure, (Microbial infection) Interacts with HCV mature core protein; this interaction, which enhances the interaction of Core with 5'-UTR may favor viral replication over translation. In terms of assembly, (Microbial infection) Interacts with HCV Serine protease/helicase NS3. As to expression, expressed in fetal and adult heart and skeletal muscles.

The protein localises to the nucleus. It is found in the cytoplasm. Multifunctional RNA-binding protein involved in the regulation of pre-mRNA splicing, mRNA stability and mRNA translation important for cell fate decision and differentiation. Plays a major role in pre-mRNA alternative splicing regulation. Mediates preferentially muscle-specific exon inclusion in numerous mRNAs important for striated cardiac and skeletal muscle cell differentiation. Binds to intronic splicing enhancer (ISE) composed of stretches of GU-rich motifs localized in flanking intron of exon that will be included by alternative splicing. Involved in embryonic stem cell (ESC) transition to cardiac cell differentiation by promoting pre-mRNA alternative splicing events of several pluripotency and/or differentiation genes. Plays a role in the regulation of mRNA stability. Binds to 3'-untranslated region (UTR) AU-rich elements in target transcripts, such as CDKN1A and MYOG, leading to maintain their stabilities. Involved in myogenic differentiation by regulating MYOG levels. Binds to multiple regions in the mRNA 3'-UTR of TP63 isoform 2, hence inducing its destabilization. Also promotes the destabilization of the CHRM2 mRNA via its binding to a region in the coding sequence. Plays a role in the regulation of mRNA translation. Mediates repression of p53/TP53 mRNA translation through its binding to U-rich element in the 3'-UTR, hence preventing EIF4E from binding to p53/TP53 mRNA and translation initiation. Binds to a huge amount of mRNAs. Required for embryonic heart development, sarcomer and M-band formation in striated muscles. Together with RBM20, promotes the expression of short isoforms of PDLIM5/ENH in cardiomyocytes. In terms of biological role, (Microbial infection) Promotes hepatitis C virus (HCV) replication over translation through the inhibition of viral protein expression. Decreases viral translation by linking viral 5'- and 3'-UTRs, blocking 80S ribosome assembly on the viral IRES and enhancing the interaction of the mature core protein and 5'-UTR. The chain is RNA-binding protein 24 from Homo sapiens (Human).